We begin with the raw amino-acid sequence, 255 residues long: NAD kinase (255 aa).

The Proton acceptor role is filled by Asp-44. NAD(+) is bound by residues 44-45 (DG), His-49, 114-115 (NE), Asp-144, Ala-152, 155-160 (SAYNLS), and Gln-216.

It belongs to the NAD kinase family. A divalent metal cation is required as a cofactor.

The protein resides in the cytoplasm. It carries out the reaction NAD(+) + ATP = ADP + NADP(+) + H(+). Its function is as follows. Involved in the regulation of the intracellular balance of NAD and NADP, and is a key enzyme in the biosynthesis of NADP. Catalyzes specifically the phosphorylation on 2'-hydroxyl of the adenosine moiety of NAD to yield NADP. This Rickettsia conorii (strain ATCC VR-613 / Malish 7) protein is NAD kinase.